Here is a 321-residue protein sequence, read N- to C-terminus: Glutamyl-Q tRNA(Asp) synthetase (321 aa).

Residues 25 to 29 and Glu61 each bind L-glutamate; that span reads RFAPS. Residues 28 to 38 carry the 'HIGH' region motif; it reads PSPSGDLHFGS. Zn(2+) is bound by residues Cys117, Cys119, Tyr131, and Cys135. Residues Tyr188 and Arg206 each contribute to the L-glutamate site. Positions 244–248 match the 'KMSKS' region motif; the sequence is KLSKQ. Lys247 contacts ATP.

The protein belongs to the class-I aminoacyl-tRNA synthetase family. GluQ subfamily. Zn(2+) is required as a cofactor.

Catalyzes the tRNA-independent activation of glutamate in presence of ATP and the subsequent transfer of glutamate onto a tRNA(Asp). Glutamate is transferred on the 2-amino-5-(4,5-dihydroxy-2-cyclopenten-1-yl) moiety of the queuosine in the wobble position of the QUC anticodon. The polypeptide is Glutamyl-Q tRNA(Asp) synthetase (Yersinia pestis).